The chain runs to 456 residues: Ezy-1 protein (456 aa).

The signal sequence occupies residues 1–28; the sequence is MQLSSSLRSARSAAASSGCALASRPVVA. 3 disordered regions span residues 167–189, 273–310, and 414–456; these read SDGG…DGDG, FTGK…GGSG, and QPAG…SPNM. Positions 281 to 293 are enriched in acidic residues; sequence AEGDDGEDEEEGE. Basic and acidic residues predominate over residues 418 to 428; it reads DGHEPEPKRPE.

The chain is Ezy-1 protein (Ezy-1) from Chlamydomonas reinhardtii (Chlamydomonas smithii).